A 142-amino-acid chain; its full sequence is Large ribosomal subunit protein uL11 (142 aa).

It belongs to the universal ribosomal protein uL11 family. Part of the ribosomal stalk of the 50S ribosomal subunit. Interacts with L10 and the large rRNA to form the base of the stalk. L10 forms an elongated spine to which L12 dimers bind in a sequential fashion forming a multimeric L10(L12)X complex. Post-translationally, one or more lysine residues are methylated.

Forms part of the ribosomal stalk which helps the ribosome interact with GTP-bound translation factors. The chain is Large ribosomal subunit protein uL11 from Pasteurella multocida (strain Pm70).